We begin with the raw amino-acid sequence, 472 residues long: MRIYNTLSRRKEEFKPLEEGKVKMYVCGPTVYNLIHIGNARPMIVFDTVRRYLEYKGYDVNYVSNFTDVDDKIIKKANEEGVSAEEISTRYIAECKKDMEGMNIKPATTHPLATQEIGGMIDMIQTLIDKGYAYEVNGTVYYRTRKFAEYGKLSKKNIDDLEAGHRDEAHSLKVTGEDEKEDPLDFVLWKPKKEGEPSWPSPWSDGRPGWHIECSVMSKKYLADEIDIHAGGEDLIFPHHENEIAQSEAANGVPFSKYWMHNAFLNIDNKKMSKSLGNFFTVRDISREYDLEVLRFFMLSAHYRNPVNFSHDLMESAKNGLDRILTAVDNLRHLSENAKDVIMTEDEKKIIASIDDIYKKFEDSMDDDFNTADAISAIFELVKLANSNSSSDNSKEYIDTLMKKITTLTDILGLKTDKKEEMLDEDIEALIAERQQARKDKNFARADEIRDELLAKGIVLKDTREGVRWSRA.

Cys27 is a binding site for Zn(2+). The 'HIGH' region signature appears at 29–39 (PTVYNLIHIGN). Cys214, His239, and Glu243 together coordinate Zn(2+). The short motif at 271–275 (KMSKS) is the 'KMSKS' region element. Residue Lys274 coordinates ATP.

It belongs to the class-I aminoacyl-tRNA synthetase family. Monomer. Zn(2+) is required as a cofactor.

It is found in the cytoplasm. It carries out the reaction tRNA(Cys) + L-cysteine + ATP = L-cysteinyl-tRNA(Cys) + AMP + diphosphate. This is Cysteine--tRNA ligase from Lachnospira eligens (strain ATCC 27750 / DSM 3376 / VPI C15-48 / C15-B4) (Eubacterium eligens).